The following is a 216-amino-acid chain: Protein-L-isoaspartate O-methyltransferase (216 aa).

Residue S61 is part of the active site.

Belongs to the methyltransferase superfamily. L-isoaspartyl/D-aspartyl protein methyltransferase family.

The protein resides in the cytoplasm. It carries out the reaction [protein]-L-isoaspartate + S-adenosyl-L-methionine = [protein]-L-isoaspartate alpha-methyl ester + S-adenosyl-L-homocysteine. In terms of biological role, catalyzes the methyl esterification of L-isoaspartyl residues in peptides and proteins that result from spontaneous decomposition of normal L-aspartyl and L-asparaginyl residues. It plays a role in the repair and/or degradation of damaged proteins. The protein is Protein-L-isoaspartate O-methyltransferase of Dinoroseobacter shibae (strain DSM 16493 / NCIMB 14021 / DFL 12).